The sequence spans 244 residues: uncharacterized protein (244 aa).

The 78-residue stretch at 1-78 (MKKRFIYHDE…PKFNFMDRYY (78 aa)) folds into the WGR domain.

This is an uncharacterized protein from Escherichia coli (strain K12).